The sequence spans 82 residues: MALSLFTVGQLIFLFWTMRITEARPDPAAKAAPAAAAVPAAAAPDTASDAAAAAALTAANAAAAAKLTADNAAAAAAATARG.

An N-terminal signal peptide occupies residues Met-1 to Ala-23. The propeptide at Arg-24–Pro-44 is removed by a dipeptidylpeptidase. Arg-81 is modified (arginine amide).

This sequence belongs to the type-I AFP family. In terms of processing, amidated. In terms of tissue distribution, detected in liver (at protein level).

The protein localises to the secreted. The protein resides in the extracellular space. In terms of biological role, contributes to protect fish blood from freezing at subzero sea water temperatures. Lowers the blood freezing point. Binds to nascent ice crystals and prevents further growth. This chain is Ice-structuring protein B, found in Pseudopleuronectes americanus (Winter flounder).